We begin with the raw amino-acid sequence, 182 residues long: MSTKDLEASMRKSLEATQRNFNTIRTGRANSSLLDRISVEYYGADTPLKSLATLSTPDSQTIQIQPFDISGLAAIEKAIAMSELGFTPNNDGKVIRINVPPLTEERRKEFCKMASKYAEEGKVALRNLRRDAIDKVKKQEKDGDFSEDQSRDEQDSVQKVLDKFIVELEKQLADKEAAILKV.

The segment at Val136–Ser156 is disordered.

The protein belongs to the RRF family.

The protein resides in the cytoplasm. Functionally, responsible for the release of ribosomes from messenger RNA at the termination of protein biosynthesis. May increase the efficiency of translation by recycling ribosomes from one round of translation to another. This is Ribosome-recycling factor from Synechococcus sp. (strain CC9902).